Here is a 378-residue protein sequence, read N- to C-terminus: Ribosomal RNA large subunit methyltransferase G (378 aa).

Belongs to the methyltransferase superfamily. RlmG family.

Its subcellular location is the cytoplasm. It catalyses the reaction guanosine(1835) in 23S rRNA + S-adenosyl-L-methionine = N(2)-methylguanosine(1835) in 23S rRNA + S-adenosyl-L-homocysteine + H(+). Specifically methylates the guanine in position 1835 (m2G1835) of 23S rRNA. The chain is Ribosomal RNA large subunit methyltransferase G from Salmonella heidelberg (strain SL476).